The primary structure comprises 146 residues: uncharacterized protein (146 aa).

Residues 6 to 26 (IPIFVISLSNISHIILAIFFF) traverse the membrane as a helical segment.

It is found in the membrane. This is an uncharacterized protein from Caenorhabditis elegans.